The primary structure comprises 226 residues: Isoprenyl transferase (226 aa).

Asp12 is a catalytic residue. A Mg(2+)-binding site is contributed by Asp12. Substrate-binding positions include 13–16 (GNAR), Trp17, Lys25, His29, and 57–59 (SFE). Asn60 functions as the Proton acceptor in the catalytic mechanism. Substrate is bound by residues Trp61, Arg63, Arg174, and 180 to 182 (RIS). Mg(2+) is bound at residue Glu193.

This sequence belongs to the UPP synthase family. In terms of assembly, homodimer. Mg(2+) serves as cofactor.

Functionally, catalyzes the condensation of isopentenyl diphosphate (IPP) with allylic pyrophosphates generating different type of terpenoids. This is Isoprenyl transferase from Rickettsia prowazekii (strain Madrid E).